A 426-amino-acid polypeptide reads, in one-letter code: Protein PHOSPHATE STARVATION RESPONSE 2 (426 aa).

Disordered regions lie at residues 27–81, 96–123, and 198–247; these read ATLD…PLRS, YTNA…QYGG, and TQPQ…NSKT. Over residues 69 to 81 the composition is skewed to polar residues; the sequence is FQSSTGSVGPLRS. 2 stretches are compositionally biased toward low complexity: residues 102–119 and 205–225; these read YNSQ…NYGS and AAQS…SSQS. Residues 237–246 are compositionally biased toward polar residues; that stretch reads SGASNTSNSK. The region spanning 243 to 303 is the HTH myb-type domain; that stretch reads SNSKTRMRWT…HLQKYRTARY (61 aa). The segment at residues 274–299 is a DNA-binding region (H-T-H motif); that stretch reads PKGVLKLMKADNLTIYHVKSHLQKYR. Disordered regions lie at residues 302 to 326 and 382 to 426; these read RYRP…PSID and DKAV…SGDR. Basic and acidic residues predominate over residues 303 to 322; the sequence is YRPELSEGSSEKKAASKEDI. Composition is skewed to polar residues over residues 387 to 401 and 411 to 426; these read ASTS…SDLP and ENSQ…SGDR.

As to quaternary structure, interacts (via C-terminus) with SPX4 (via N-terminus) in the presence of inositol polyphosphate. Interacts (via C-terminus) with SPX1 and SPX2 (via SPX domain). Interacts with RLI1 in the nucleus.

The protein localises to the nucleus. It is found in the cytoplasm. In terms of biological role, transcription factor involved in phosphate starvation signaling. Binds to P1BS, an imperfect palindromic sequence 5'-GNATATNC-3', to promote the expression of inorganic phosphate (Pi) starvation-responsive genes. Functionally redundant with PHR1 and PHR3 in regulating Pi starvation response and Pi homeostasis. Involved in both systematic and local Pi-signaling pathways. Regulates several Pi transporters. PHR2 binding to DNA is repressed redundantly by SPX1, SPX2 and SPX4 in a PI-dependent manner. The DNA-binding activity is also repressed by SPX4. Involved in root growth under Pi deprivation. Involved in the modulation of Pi response and homeostasis together with RLI1; promotes RLI1 expression in response to nitrate availability, thus triggering the nitrate-induced phosphate response (NIPR). The chain is Protein PHOSPHATE STARVATION RESPONSE 2 from Oryza sativa subsp. indica (Rice).